The chain runs to 61 residues: Statherin (61 aa).

The first 19 residues, 1–19, serve as a signal peptide directing secretion; that stretch reads MXFLXFXLXLLXMXXMXXX. Residues 20-25 form a hydroxyapatite-binding; inhibits crystal growth region; that stretch reads DSSEEK. Phosphoserine occurs at positions 21 and 22. The disordered stretch occupies residues 37 to 61; sequence RYGPYQPFAPQPLYPQPYQPYQPQY. Residues 37-61 are hydrophobic; inhibits precipitation of calcium phosphate salts; that stretch reads RYGPYQPFAPQPLYPQPYQPYQPQY. Positions 43–61 are enriched in pro residues; sequence PFAPQPLYPQPYQPYQPQY.

This sequence belongs to the histatin/statherin family. As to expression, secreted by parotid and submandibular glands.

It localises to the secreted. In terms of biological role, salivary protein that stabilizes saliva supersaturated with calcium salts by inhibiting the precipitation of calcium phosphate salts. It also modulates hydroxyapatite crystal formation on the tooth surface. This Macaca fascicularis (Crab-eating macaque) protein is Statherin (STATH).